We begin with the raw amino-acid sequence, 478 residues long: MHPNVYIPDAFLEKIQTILPANLNMEDFISACQRPLRKSIRVNTLKMSVEDFVKRAEDKGWTLSPVPWCDNGFWIEADESVVPLGNTAEHMSGLFYIQEASSMMPVSALFMNDESYDAVLDTAAAPGSKTTQIAALMKNEGVLVANEYAASRVKVLHANIERCGVRNAALSNFDGRVFGGWLPEQFDAVLLDAPCSGEGTVRKDEDAMKNWTQASVLEIADTQKDLIESAFHALKPGGVLVYSTCTLSTEENQQVCHHLKETFGDAVEFESLDGLFENANAALTEEGFLHIFPQVYDCEGFFVARIRKHHSVEAPQVKKRMGKFPFVKASKKESEEISKQLHNALDIELPSESTVWLRDKDVWLFPDALEPMIGELRFSRMGIKIAEAHKNGYRWQHQVATALATGAESNAIELTIEEAREWYMGRDVRPQIIPEGLKTGKGEVLVKYQGAIIGLGKWVSNRIKNGLPRELVRDKNLF.

S-adenosyl-L-methionine is bound by residues 123 to 129 (AAAPGSK), glutamate 147, aspartate 174, and aspartate 192. Cysteine 245 (nucleophile) is an active-site residue.

It belongs to the class I-like SAM-binding methyltransferase superfamily. RsmB/NOP family.

The protein resides in the cytoplasm. It carries out the reaction cytidine(1407) in 16S rRNA + S-adenosyl-L-methionine = 5-methylcytidine(1407) in 16S rRNA + S-adenosyl-L-homocysteine + H(+). Functionally, specifically methylates the cytosine at position 1407 (m5C1407) of 16S rRNA. In Vibrio parahaemolyticus serotype O3:K6 (strain RIMD 2210633), this protein is Ribosomal RNA small subunit methyltransferase F.